The sequence spans 501 residues: DEAD-box ATP-dependent RNA helicase 20 (501 aa).

Composition is skewed to basic and acidic residues over residues 1–20 (MSRY…RRSD) and 38–53 (SKKD…KLDL). The disordered stretch occupies residues 1 to 53 (MSRYDSRTGDSTSYRDRRSDSGFGGTSSYGSSGSHTSSKKDNDGNESPRKLDL). The short motif at 99 to 127 (KSFRDVGFPDYVLEEVKKAGFTEPTPIQS) is the Q motif element. The 176-residue stretch at 130–305 (WPMAMKGRDL…KKFLYNPYKV (176 aa)) folds into the Helicase ATP-binding domain. ATP is bound at residue 143–150 (AETGSGKT). Positions 253–256 (DEAD) match the DEAD box motif. Positions 333 to 478 (KLVKLLEDIM…KVSPELASMG (146 aa)) constitute a Helicase C-terminal domain. Residues 473–501 (ELASMGRSTAPPPPGLGGFRDRGSRRGWS) are disordered. The span at 491–501 (FRDRGSRRGWS) shows a compositional bias: basic and acidic residues.

Belongs to the DEAD box helicase family. DDX5/DBP2 subfamily.

Its subcellular location is the nucleus. It catalyses the reaction ATP + H2O = ADP + phosphate + H(+). Functionally, ATP-dependent RNA helicase involved nonsense-mediated mRNA decay and ribosome biogenesis through rRNA processing. This Arabidopsis thaliana (Mouse-ear cress) protein is DEAD-box ATP-dependent RNA helicase 20 (RH20).